Reading from the N-terminus, the 1133-residue chain is Early transcription factor large subunit homolog (1133 aa).

The region spanning 52–352 (KGGRAFFPCD…PNGQPLQRQQ (301 aa)) is the Helicase ATP-binding domain. ATP is bound at residue 99-106 (WQTGTGKS). Residues 281 to 284 (DEIH) carry the DEAH box motif. Positions 524 to 724 (MMKDILSIIR…EGDKALRKHA (201 aa)) constitute a Helicase C-terminal domain.

The protein belongs to the DEAD box helicase family. DEAH subfamily.

It is found in the virion. The enzyme catalyses ATP + H2O = ADP + phosphate + H(+). Its function is as follows. Putative initation factor. The chain is Early transcription factor large subunit homolog from Ornithodoros (relapsing fever ticks).